Reading from the N-terminus, the 199-residue chain is Probable thymidylate kinase (199 aa).

Residue 9 to 16 (GIDGCGKT) participates in ATP binding.

Belongs to the thymidylate kinase family.

It carries out the reaction dTMP + ATP = dTDP + ADP. The chain is Probable thymidylate kinase from Methanococcus maripaludis (strain C7 / ATCC BAA-1331).